We begin with the raw amino-acid sequence, 159 residues long: Lipoprotein signal peptidase (159 aa).

Helical transmembrane passes span 59–79 (PMIL…YVVF) and 87–107 (FLIT…DRIL). Catalysis depends on residues Asp-113 and Asp-139. A helical membrane pass occupies residues 131–151 (LWPVFNIADSAITIGACVLVI).

It belongs to the peptidase A8 family.

Its subcellular location is the cell inner membrane. The catalysed reaction is Release of signal peptides from bacterial membrane prolipoproteins. Hydrolyzes -Xaa-Yaa-Zaa-|-(S,diacylglyceryl)Cys-, in which Xaa is hydrophobic (preferably Leu), and Yaa (Ala or Ser) and Zaa (Gly or Ala) have small, neutral side chains.. It participates in protein modification; lipoprotein biosynthesis (signal peptide cleavage). Functionally, this protein specifically catalyzes the removal of signal peptides from prolipoproteins. This is Lipoprotein signal peptidase from Chlorobium phaeobacteroides (strain BS1).